A 383-amino-acid polypeptide reads, in one-letter code: TnpB-like protein ORF383B (383 aa).

Zn(2+)-binding residues include Cys-328, Cys-331, Cys-345, and Cys-348.

In the N-terminal section; belongs to the transposase 2 family. The protein in the C-terminal section; belongs to the transposase 35 family.

This Acidianus convivator (ATV) protein is TnpB-like protein ORF383B.